The sequence spans 351 residues: Glycerol-3-phosphate dehydrogenase [NAD(P)+] (351 aa).

NADPH is bound by residues Ser-18, Trp-19, Arg-38, and Lys-122. Residues Lys-122, Gly-153, and Ser-155 each contribute to the sn-glycerol 3-phosphate site. NADPH is bound at residue Ala-157. Sn-glycerol 3-phosphate contacts are provided by Lys-208, Asp-261, Ser-271, Arg-272, and Asn-273. Catalysis depends on Lys-208, which acts as the Proton acceptor. Arg-272 serves as a coordination point for NADPH. Glu-297 contacts NADPH.

Belongs to the NAD-dependent glycerol-3-phosphate dehydrogenase family.

Its subcellular location is the cytoplasm. It catalyses the reaction sn-glycerol 3-phosphate + NAD(+) = dihydroxyacetone phosphate + NADH + H(+). The catalysed reaction is sn-glycerol 3-phosphate + NADP(+) = dihydroxyacetone phosphate + NADPH + H(+). The protein operates within membrane lipid metabolism; glycerophospholipid metabolism. Functionally, catalyzes the reduction of the glycolytic intermediate dihydroxyacetone phosphate (DHAP) to sn-glycerol 3-phosphate (G3P), the key precursor for phospholipid synthesis. The chain is Glycerol-3-phosphate dehydrogenase [NAD(P)+] from Bordetella parapertussis (strain 12822 / ATCC BAA-587 / NCTC 13253).